Consider the following 31-residue polypeptide: Cyclotide hyen-J (31 aa).

Positions 1-31 (GSVPCGESCVWIPCITSIAGCSCSNKVCYMD) form a cross-link, cyclopeptide (Gly-Asp). Disulfide bonds link cysteine 5-cysteine 21, cysteine 9-cysteine 23, and cysteine 14-cysteine 28.

In terms of processing, this is a cyclic peptide. Detected in seeds (at protein level).

In terms of biological role, probably participates in a plant defense mechanism. The polypeptide is Cyclotide hyen-J (Pigea enneasperma (Spade flower)).